A 119-amino-acid chain; its full sequence is Large ribosomal subunit protein uL14 (119 aa).

It belongs to the universal ribosomal protein uL14 family. In terms of assembly, part of the 50S ribosomal subunit. Forms a cluster with proteins L3 and L19. In the 70S ribosome, L14 and L19 interact and together make contacts with the 16S rRNA in bridges B5 and B8.

Binds to 23S rRNA. Forms part of two intersubunit bridges in the 70S ribosome. This chain is Large ribosomal subunit protein uL14, found in Wolbachia pipientis subsp. Culex pipiens (strain wPip).